The sequence spans 142 residues: Augurin-A (142 aa).

The first 28 residues, 1–28 (MLSEKFHLRLLTLLTLLTALSLTDVASE), serve as a signal peptide directing secretion. Propeptides lie at residues 29-66 (SKLE…LKRP) and 127-142 (GAAS…YDYY).

The protein belongs to the augurin family.

It localises to the secreted. The protein localises to the cytoplasm. It is found in the apical cell membrane. In terms of biological role, probable hormone. Required for the proper formation of the central nervous system by attenuating cell proliferation during development. This is Augurin-A from Danio rerio (Zebrafish).